The sequence spans 593 residues: FAD-binding monooxygenase acrE (593 aa).

FAD contacts are provided by residues 61–64, 73–74, and Y79; these read TWRF and DS. 71 to 73 contributes to the NADP(+) binding site; sequence RVD. NADP(+) is bound by residues 200–206 and 223–224; these read TGASGVQ and RS.

Belongs to the FAD-binding monooxygenase family. FAD serves as cofactor.

It participates in secondary metabolite biosynthesis. Its function is as follows. FAD-binding monooxygenase; part of the cluster that mediates the biosynthesis of acurin A, a highly reduced polyketide coupled to a serine via a peptide bond. The activities of the highly reducing polyketide synthase acrA and the nonribosomal peptide synthetase acrB are collectively responsible for the synthesis of the acurin A core structure with a heptaketide backbone produced by acrA covalently fused to a L-serine by acrB. After the formation of the PK-NRP hybrid product, it is detached from acrB by reductive release to set up the formation of the lactam ring by aldol condensation. The hydrolyase acrC then catalyzes water loss to generate a double bond in the ring. This double bond is probably reduced, which is followed by three oxidations at C-22 to generate the carboxylic acid moiety, involving probably the FAD-binding monooxygenase acrE and the cytochrome P450 monooxygenases acrD and acrF. Finally, a last methylation step performed by the O-methyltransferase acrG leads to the production of acurin A. This chain is FAD-binding monooxygenase acrE, found in Aspergillus aculeatus (strain ATCC 16872 / CBS 172.66 / WB 5094).